The following is an 84-amino-acid chain: Magnetosome protein MamG (84 aa).

Over 1–3 (MIK) the chain is Cytoplasmic. Residues 4–24 (GIAGVGGTALGVGGGVAAPPV) form a helical membrane-spanning segment. Topologically, residues 25–40 (SAAAVGSTLLAGKGVC) are lumenal. Positions 41 to 48 (LGLGLGLG) are LG repeat. Residues 41-61 (LGLGLGLGAWGPVLLGVAGLA) traverse the membrane as a helical segment. The Cytoplasmic portion of the chain corresponds to 62–84 (CAASLCDYLKNRKAQAEASAEPA).

This sequence belongs to the magnetosome MamG (TC 9.B.95) protein family.

Its subcellular location is the magnetosome membrane. Plays a role in regulating magnetite crystal size. The chain is Magnetosome protein MamG from Magnetospirillum gryphiswaldense (strain DSM 6361 / JCM 21280 / NBRC 15271 / MSR-1).